A 150-amino-acid polypeptide reads, in one-letter code: MNTQIEYKLLDARLAEQLPAYATPGAAGLDLRACIDLPLEIAPGQTTLIPTGIAIHIADPGLAAIILPRSGLGHKHGIVLGNLVGLIDSDYQGQLMVSCWNRGSVAYAVQPLERIAQLVIVPVVQAQFRQVDEFEASDRGVAGFGSTGRG.

Residues 69-71, Asn82, 86-88, and Met96 each bind substrate; these read RSG and LID.

It belongs to the dUTPase family. Mg(2+) is required as a cofactor.

It carries out the reaction dUTP + H2O = dUMP + diphosphate + H(+). It functions in the pathway pyrimidine metabolism; dUMP biosynthesis; dUMP from dCTP (dUTP route): step 2/2. This enzyme is involved in nucleotide metabolism: it produces dUMP, the immediate precursor of thymidine nucleotides and it decreases the intracellular concentration of dUTP so that uracil cannot be incorporated into DNA. In Leptothrix cholodnii (strain ATCC 51168 / LMG 8142 / SP-6) (Leptothrix discophora (strain SP-6)), this protein is Deoxyuridine 5'-triphosphate nucleotidohydrolase.